Here is an 89-residue protein sequence, read N- to C-terminus: Putative regulatory protein Nther_1328 (89 aa).

This sequence belongs to the RemA family.

The chain is Putative regulatory protein Nther_1328 from Natranaerobius thermophilus (strain ATCC BAA-1301 / DSM 18059 / JW/NM-WN-LF).